A 417-amino-acid polypeptide reads, in one-letter code: Gamma-glutamyl phosphate reductase (417 aa).

The protein belongs to the gamma-glutamyl phosphate reductase family.

Its subcellular location is the cytoplasm. The catalysed reaction is L-glutamate 5-semialdehyde + phosphate + NADP(+) = L-glutamyl 5-phosphate + NADPH + H(+). The protein operates within amino-acid biosynthesis; L-proline biosynthesis; L-glutamate 5-semialdehyde from L-glutamate: step 2/2. Functionally, catalyzes the NADPH-dependent reduction of L-glutamate 5-phosphate into L-glutamate 5-semialdehyde and phosphate. The product spontaneously undergoes cyclization to form 1-pyrroline-5-carboxylate. This chain is Gamma-glutamyl phosphate reductase, found in Proteus mirabilis (strain HI4320).